Here is a 1297-residue protein sequence, read N- to C-terminus: Phosphoribosylformylglycinamidine synthase (1297 aa).

Residues 307–318 and alanine 678 contribute to the ATP site; that span reads GASTGSGGEIRD. 3 residues coordinate Mg(2+): glutamate 718, asparagine 722, and aspartate 886. Positions 1044-1297 constitute a Glutamine amidotransferase type-1 domain; the sequence is MAILREQGVN…MFQNARKYFG (254 aa). The active-site Nucleophile is the cysteine 1137. Catalysis depends on residues histidine 1262 and glutamate 1264.

It in the N-terminal section; belongs to the FGAMS family. In terms of assembly, monomer.

It is found in the cytoplasm. The enzyme catalyses N(2)-formyl-N(1)-(5-phospho-beta-D-ribosyl)glycinamide + L-glutamine + ATP + H2O = 2-formamido-N(1)-(5-O-phospho-beta-D-ribosyl)acetamidine + L-glutamate + ADP + phosphate + H(+). Its pathway is purine metabolism; IMP biosynthesis via de novo pathway; 5-amino-1-(5-phospho-D-ribosyl)imidazole from N(2)-formyl-N(1)-(5-phospho-D-ribosyl)glycinamide: step 1/2. In terms of biological role, phosphoribosylformylglycinamidine synthase involved in the purines biosynthetic pathway. Catalyzes the ATP-dependent conversion of formylglycinamide ribonucleotide (FGAR) and glutamine to yield formylglycinamidine ribonucleotide (FGAM) and glutamate. In Vibrio cholerae serotype O1 (strain ATCC 39315 / El Tor Inaba N16961), this protein is Phosphoribosylformylglycinamidine synthase.